The following is a 429-amino-acid chain: Adenylosuccinate synthetase (429 aa).

GTP contacts are provided by residues 12-18 (GDEGKGK) and 40-42 (GHT). The Proton acceptor role is filled by D13. D13 and G40 together coordinate Mg(2+). Residues 13–16 (DEGK), 38–41 (NAGH), T128, R142, Q223, T238, and R302 each bind IMP. The active-site Proton donor is the H41. 298–304 (TTTGRPR) contacts substrate. GTP contacts are provided by residues R304, 330 to 332 (SID), and 412 to 414 (SVG).

Belongs to the adenylosuccinate synthetase family. Homodimer. Requires Mg(2+) as cofactor.

It is found in the cytoplasm. It carries out the reaction IMP + L-aspartate + GTP = N(6)-(1,2-dicarboxyethyl)-AMP + GDP + phosphate + 2 H(+). It participates in purine metabolism; AMP biosynthesis via de novo pathway; AMP from IMP: step 1/2. In terms of biological role, plays an important role in the de novo pathway of purine nucleotide biosynthesis. Catalyzes the first committed step in the biosynthesis of AMP from IMP. In Bacillus cereus (strain ZK / E33L), this protein is Adenylosuccinate synthetase.